Consider the following 772-residue polypeptide: Cadherin-19 (772 aa).

The signal sequence occupies residues 1–21 (MNCYLLLRFMLGIPLLWPCLG). Residues 22–43 (ATENSQTKKVKQPVRSHLRVKR) constitute a propeptide that is removed on maturation. Cadherin domains are found at residues 44 to 148 (GWVW…EPKF), 149 to 256 (LDEP…KPIF), 257 to 370 (KESL…PPLF), 371 to 470 (LLPY…APEF), and 470 to 581 (FSQY…STQT). Topologically, residues 44–596 (GWVWNQFFVP…LVLSMGFKTE (553 aa)) are extracellular. N-linked (GlcNAc...) asparagine glycans are attached at residues asparagine 57 and asparagine 74. N-linked (GlcNAc...) asparagine glycans are attached at residues asparagine 419, asparagine 437, asparagine 508, asparagine 515, asparagine 516, and asparagine 534. A helical transmembrane segment spans residues 597 to 617 (VIIAILICIMIIFGFIFLTLG). Residues 618 to 772 (LKQRRKQILF…MFGSAVQSNN (155 aa)) are Cytoplasmic-facing.

In terms of tissue distribution, expressed in many tissues, with the exception of uterus.

It localises to the cell membrane. Functionally, cadherins are calcium-dependent cell adhesion proteins. They preferentially interact with themselves in a homophilic manner in connecting cells; cadherins may thus contribute to the sorting of heterogeneous cell types. The sequence is that of Cadherin-19 (CDH19) from Homo sapiens (Human).